Here is a 61-residue protein sequence, read N- to C-terminus: MAKKALINKAAAKPKFKVRGYTRCQRCGRPRSVFRKFGLCRVCFREMAHAGELPGVSKSSW.

Residues C24, C27, C40, and C43 each contribute to the Zn(2+) site.

Belongs to the universal ribosomal protein uS14 family. Zinc-binding uS14 subfamily. In terms of assembly, part of the 30S ribosomal subunit. Contacts proteins S3 and S10. Requires Zn(2+) as cofactor.

Its function is as follows. Binds 16S rRNA, required for the assembly of 30S particles and may also be responsible for determining the conformation of the 16S rRNA at the A site. The chain is Small ribosomal subunit protein uS14B from Saccharopolyspora erythraea (strain ATCC 11635 / DSM 40517 / JCM 4748 / NBRC 13426 / NCIMB 8594 / NRRL 2338).